A 401-amino-acid polypeptide reads, in one-letter code: O-antigen ligase (401 aa).

At methionine 1–histidine 20 the chain is on the cytoplasmic side. Residues tryptophan 21–valine 37 traverse the membrane as a helical segment. At glycine 38 to aspartate 42 the chain is on the periplasmic side. The helical transmembrane segment at tyrosine 43–leucine 61 threads the bilayer. At glutamine 62–serine 72 the chain is on the cytoplasmic side. Residues proline 73–serine 92 traverse the membrane as a helical segment. Over threonine 93–lysine 103 the chain is Periplasmic. Residues arginine 104 to alanine 122 form a helical membrane-spanning segment. The Cytoplasmic segment spans residues proline 123–alanine 129. Residues threonine 130 to tryptophan 150 traverse the membrane as a helical segment. Residues aspartate 151–glycine 161 lie on the Periplasmic side of the membrane. The helical transmembrane segment at alanine 162–tyrosine 183 threads the bilayer. Topologically, residues tryptophan 184–proline 189 are cytoplasmic. Residues isoleucine 190–alanine 208 form a helical membrane-spanning segment. Residues threonine 209–arginine 212 lie on the Periplasmic side of the membrane. Residues threonine 213 to glycine 229 form a helical membrane-spanning segment. At aspartate 230–alanine 234 the chain is on the cytoplasmic side. Residues leucine 235–tyrosine 252 form a helical membrane-spanning segment. Residues proline 253–glutamate 306 are Periplasmic-facing. Residues glutamine 258–leucine 319 form a WZY-C region. Residues leucine 307 to phenylalanine 331 form a helical membrane-spanning segment. Residues serine 332–proline 339 are Cytoplasmic-facing. Residues alanine 340 to threonine 357 traverse the membrane as a helical segment. Over glutamate 358–glutamate 368 the chain is Periplasmic. Residues histidine 369–isoleucine 385 traverse the membrane as a helical segment. Residues glutamine 386–proline 401 lie on the Cytoplasmic side of the membrane.

The protein belongs to the O-antigen ligase family. In terms of assembly, homodimer.

It localises to the cell inner membrane. It catalyses the reaction a lipid-linked O antigen + a lipid A-core oligosaccharide = a lipopolysaccharide + a polyisoprenyl diphosphate.. It functions in the pathway bacterial outer membrane biogenesis; lipopolysaccharide biosynthesis. Activity does not require ATP and magnesium ions. Its function is as follows. Transferase involved in the biosynthesis of the lipopolysaccharide (LPS). Catalyzes the transfer of a polymerized O-antigen molecule from its polyprenyl diphosphate membrane anchor to a terminal sugar of the lipid A-core oligosaccharide, finalizing the biosynthesis of the lipopolysaccharide. Required for the attachment of both A-band and B-band O-antigens, two forms of O-antigen produced by P.aeruginosa, onto the lipid A-core receptors. Important for cell wall integrity and motility of the bacteria. This Pseudomonas aeruginosa (strain ATCC 15692 / DSM 22644 / CIP 104116 / JCM 14847 / LMG 12228 / 1C / PRS 101 / PAO1) protein is O-antigen ligase.